Reading from the N-terminus, the 414-residue chain is Probable solanesyl-diphosphate synthase 3, chloroplastic (414 aa).

Residues methionine 1–proline 23 show a composition bias toward low complexity. A disordered region spans residues methionine 1–arginine 36. The transit peptide at methionine 1–proline 72 directs the protein to the chloroplast. Over residues serine 24–glutamine 35 the composition is skewed to pro residues. 3 residues coordinate isopentenyl diphosphate: lysine 134, arginine 137, and histidine 172. Positions 179 and 183 each coordinate Mg(2+). Arginine 188 contacts an all-trans-polyprenyl diphosphate. Arginine 189 contacts isopentenyl diphosphate. An all-trans-polyprenyl diphosphate contacts are provided by lysine 265, threonine 266, glutamine 303, and lysine 320.

The protein belongs to the FPP/GGPP synthase family. Homodimer. Mg(2+) serves as cofactor.

It is found in the plastid. It localises to the chloroplast. The catalysed reaction is 7 isopentenyl diphosphate + (2E)-geranyl diphosphate = all-trans-nonaprenyl diphosphate + 7 diphosphate. Its function is as follows. Involved in providing solanesyl diphosphate for plastoquinone-9 (PQ-9) formation. The sequence is that of Probable solanesyl-diphosphate synthase 3, chloroplastic from Oryza sativa subsp. japonica (Rice).